A 354-amino-acid polypeptide reads, in one-letter code: Probable dual-specificity RNA methyltransferase RlmN (354 aa).

Catalysis depends on Glu-94, which acts as the Proton acceptor. A Radical SAM core domain is found at Gly-103–Arg-332. Cysteines 110 and 343 form a disulfide. [4Fe-4S] cluster-binding residues include Cys-117, Cys-121, and Cys-124. S-adenosyl-L-methionine is bound by residues Gly-169–Glu-170, Ser-201, Ser-224–His-226, and Asn-300. Cys-343 functions as the S-methylcysteine intermediate in the catalytic mechanism.

This sequence belongs to the radical SAM superfamily. RlmN family. [4Fe-4S] cluster is required as a cofactor.

It localises to the cytoplasm. The catalysed reaction is adenosine(2503) in 23S rRNA + 2 reduced [2Fe-2S]-[ferredoxin] + 2 S-adenosyl-L-methionine = 2-methyladenosine(2503) in 23S rRNA + 5'-deoxyadenosine + L-methionine + 2 oxidized [2Fe-2S]-[ferredoxin] + S-adenosyl-L-homocysteine. It catalyses the reaction adenosine(37) in tRNA + 2 reduced [2Fe-2S]-[ferredoxin] + 2 S-adenosyl-L-methionine = 2-methyladenosine(37) in tRNA + 5'-deoxyadenosine + L-methionine + 2 oxidized [2Fe-2S]-[ferredoxin] + S-adenosyl-L-homocysteine. Functionally, specifically methylates position 2 of adenine 2503 in 23S rRNA and position 2 of adenine 37 in tRNAs. The polypeptide is Probable dual-specificity RNA methyltransferase RlmN (Moorella thermoacetica (strain ATCC 39073 / JCM 9320)).